A 401-amino-acid chain; its full sequence is MIIMIPIYAITWNFRDTPEGFDKIVNNDYNYFESLCKKSSIDEFVILITCNRVEIYAYTRNEIDKDLFKDSLIYNYPESTMHLLRVASGLESMSIGENDIMRQVKEAYELSIKRKTSGKILSYIFKKALNVGKEVRTQTSISRGKTSIPAISLDICDNEYGINNKSILIIGNGKMATDFSRYLKEYRPGNVTIAGRSIDHARNLAVLYGYSYDSIKNLNNLIKNSDIIIAATSAGNYIVKDLGDLARNKYFIDISKPENIDPEISKYARLLSINEIGKILKRNEDEKKGEVEIAEVIINQEQKTIDEKLKEMMLDDVIAMFYKFANNVKKDELEELFLIQDFNDEQKKDIDAMTSSLINKILAPYTNSVKQFIKENKNFDYILNEYKKMLEQFMENIVKKL.

Residues 49-52 (TCNR), Ser-92, 97-99 (END), and Gln-103 contribute to the substrate site. Cys-50 functions as the Nucleophile in the catalytic mechanism. NADP(+) is bound at residue 171 to 176 (GNGKMA).

This sequence belongs to the glutamyl-tRNA reductase family. As to quaternary structure, homodimer.

The enzyme catalyses (S)-4-amino-5-oxopentanoate + tRNA(Glu) + NADP(+) = L-glutamyl-tRNA(Glu) + NADPH + H(+). The protein operates within porphyrin-containing compound metabolism; protoporphyrin-IX biosynthesis; 5-aminolevulinate from L-glutamyl-tRNA(Glu): step 1/2. Functionally, catalyzes the NADPH-dependent reduction of glutamyl-tRNA(Glu) to glutamate 1-semialdehyde (GSA). The sequence is that of Glutamyl-tRNA reductase from Picrophilus torridus (strain ATCC 700027 / DSM 9790 / JCM 10055 / NBRC 100828 / KAW 2/3).